The following is a 294-amino-acid chain: Putative lipid kinase SP_1045 (294 aa).

Residues 1–131 enclose the DAGKc domain; sequence MKKAMVIINP…IDIGKANDNY (131 aa). Residues 9 to 13, threonine 40, 66 to 72, and threonine 93 each bind ATP; these read NPTSG and GDGTVNE. Residues aspartate 212 and tyrosine 214 each contribute to the Mg(2+) site. The active-site Proton acceptor is the aspartate 269.

Belongs to the diacylglycerol/lipid kinase family. Mg(2+) serves as cofactor.

Functionally, may catalyze the ATP-dependent phosphorylation of lipids other than diacylglycerol (DAG). In fact, is not able to exhibit diacylglycerol kinase activity in vitro. The protein is Putative lipid kinase SP_1045 of Streptococcus pneumoniae serotype 4 (strain ATCC BAA-334 / TIGR4).